Consider the following 152-residue polypeptide: Transcriptional regulator MraZ (152 aa).

2 SpoVT-AbrB domains span residues 5–52 and 81–124; these read ASAI…PLDE and AHEC…DEAA.

It belongs to the MraZ family. In terms of assembly, forms oligomers.

It localises to the cytoplasm. The protein localises to the nucleoid. The protein is Transcriptional regulator MraZ of Shewanella violacea (strain JCM 10179 / CIP 106290 / LMG 19151 / DSS12).